A 609-amino-acid chain; its full sequence is Zinc metalloproteinase-disintegrin-like VMP-III (609 aa).

A signal peptide spans 1 to 20; sequence MIQVLLVTICLAAFPYQGSS. Residues 21–189 constitute a propeptide that is removed on maturation; sequence IILESGNVND…KKASQLVVTA (169 aa). A Peptidase M12B domain is found at 198–393; it reads RFVELFLVVD…HNPECILNEP (196 aa). Positions 201 and 285 each coordinate Ca(2+). 3 disulfide bridges follow: Cys308–Cys388, Cys348–Cys372, and Cys350–Cys355. His333 is a binding site for Zn(2+). The active site involves Glu334. Zn(2+)-binding residues include His337 and His343. Asn371 carries N-linked (GlcNAc...) asparagine glycosylation. Ca(2+) is bound by residues Cys388, Asn391, Val403, Asn406, Leu408, Glu410, Glu413, and Asp416. Positions 401 to 487 constitute a Disintegrin domain; it reads PPVCGNELLE…ECPADVFHKN (87 aa). Intrachain disulfides connect Cys404–Cys433, Cys415–Cys428, Cys417–Cys423, Cys427–Cys450, Cys441–Cys447, Cys446–Cys472, Cys459–Cys479, Cys466–Cys498, Cys491–Cys503, Cys510–Cys560, Cys525–Cys571, Cys538–Cys548, Cys555–Cys597, and Cys591–Cys602. The D/ECD-tripeptide signature appears at 465–467; that stretch reads ECD. Asp467, Pro468, Glu470, Asp482, and Val483 together coordinate Ca(2+).

It belongs to the venom metalloproteinase (M12B) family. P-III subfamily. P-IIIa sub-subfamily. In terms of assembly, monomer. Requires Zn(2+) as cofactor. In terms of tissue distribution, expressed by the venom gland.

The protein resides in the secreted. In terms of biological role, snake venom metalloproteinase that impairs hemostasis in the envenomed animal. This is Zinc metalloproteinase-disintegrin-like VMP-III from Crotalus viridis viridis (Prairie rattlesnake).